The sequence spans 550 residues: Phosphomannomutase (550 aa).

The active-site Phosphoserine intermediate is Ser-148. Mg(2+) is bound by residues Ser-148, Asp-300, Asp-302, and Asp-304.

The protein belongs to the phosphohexose mutase family. Mg(2+) serves as cofactor.

The catalysed reaction is alpha-D-mannose 1-phosphate = D-mannose 6-phosphate. The sequence is that of Phosphomannomutase (manB) from Mycoplasma genitalium (strain ATCC 33530 / DSM 19775 / NCTC 10195 / G37) (Mycoplasmoides genitalium).